A 201-amino-acid polypeptide reads, in one-letter code: ATP-dependent Clp protease proteolytic subunit (201 aa).

Residue serine 101 is the Nucleophile of the active site. Histidine 126 is a catalytic residue.

This sequence belongs to the peptidase S14 family. In terms of assembly, component of the chloroplastic Clp protease core complex.

The protein resides in the plastid. It is found in the chloroplast stroma. It carries out the reaction Hydrolysis of proteins to small peptides in the presence of ATP and magnesium. alpha-casein is the usual test substrate. In the absence of ATP, only oligopeptides shorter than five residues are hydrolyzed (such as succinyl-Leu-Tyr-|-NHMec, and Leu-Tyr-Leu-|-Tyr-Trp, in which cleavage of the -Tyr-|-Leu- and -Tyr-|-Trp bonds also occurs).. Its function is as follows. Cleaves peptides in various proteins in a process that requires ATP hydrolysis. Has a chymotrypsin-like activity. Plays a major role in the degradation of misfolded proteins. This is ATP-dependent Clp protease proteolytic subunit from Chlorella vulgaris (Green alga).